Here is a 575-residue protein sequence, read N- to C-terminus: Beta-amylase 1, chloroplastic (575 aa).

The transit peptide at 1–41 (MALNLSHQLGVLAGTPIKSGEMTDSSLLSISPPSARMMTPK) directs the protein to the chloroplast. A phosphoserine mark is found at Ser55 and Ser59. Cysteines 73 and 511 form a disulfide. Substrate contacts are provided by Asp147, His187, and Asp195. Residue Glu279 is the Proton donor of the active site. 3 residues coordinate substrate: Lys392, His397, and Thr439. Glu477 functions as the Proton acceptor in the catalytic mechanism. Substrate contacts are provided by residues 478-479 (NA) and Arg517.

Belongs to the glycosyl hydrolase 14 family. Expressed in leaves, roots, flowers, pollen, and seeds.

The protein localises to the plastid. The protein resides in the chloroplast. The enzyme catalyses Hydrolysis of (1-&gt;4)-alpha-D-glucosidic linkages in polysaccharides so as to remove successive maltose units from the non-reducing ends of the chains.. Redox regulation; active in reducing conditions, inactive in oxidizing conditions. Thioredoxins f1, m1, and y1 mediate the reversible reductive activation of oxidized BAM1. Its function is as follows. Beta-amylase activity. Can use p-nitrophenyl maltopentaoside (PNPG5) as substrate only in reduced form. Can play a minor role in the starch degradation and maltose metabolism in chloroplasts during the night. More active on phosphorylated glucan. Interacts directly with starch or other alpha-1,4-glucan. The sequence is that of Beta-amylase 1, chloroplastic (BAM1) from Arabidopsis thaliana (Mouse-ear cress).